Consider the following 266-residue polypeptide: Type III pantothenate kinase (266 aa).

6–13 provides a ligand contact to ATP; the sequence is DVGNSHTV. 112–115 is a substrate binding site; it reads GIDR. Asp114 serves as the catalytic Proton acceptor. Asp134 contacts K(+). Thr137 contacts ATP. Thr190 is a substrate binding site.

The protein belongs to the type III pantothenate kinase family. As to quaternary structure, homodimer. Requires NH4(+) as cofactor. It depends on K(+) as a cofactor.

It localises to the cytoplasm. It catalyses the reaction (R)-pantothenate + ATP = (R)-4'-phosphopantothenate + ADP + H(+). It functions in the pathway cofactor biosynthesis; coenzyme A biosynthesis; CoA from (R)-pantothenate: step 1/5. Its function is as follows. Catalyzes the phosphorylation of pantothenate (Pan), the first step in CoA biosynthesis. This chain is Type III pantothenate kinase, found in Desulfotalea psychrophila (strain LSv54 / DSM 12343).